Consider the following 302-residue polypeptide: UDP-N-acetylenolpyruvoylglucosamine reductase (302 aa).

One can recognise an FAD-binding PCMH-type domain in the interval 31–196 (KIGGPADVLA…LRAWISLERG (166 aa)). R175 is a catalytic residue. The Proton donor role is filled by S225. The active site involves E295.

It belongs to the MurB family. FAD serves as cofactor.

It localises to the cytoplasm. The catalysed reaction is UDP-N-acetyl-alpha-D-muramate + NADP(+) = UDP-N-acetyl-3-O-(1-carboxyvinyl)-alpha-D-glucosamine + NADPH + H(+). The protein operates within cell wall biogenesis; peptidoglycan biosynthesis. Cell wall formation. This is UDP-N-acetylenolpyruvoylglucosamine reductase from Caldanaerobacter subterraneus subsp. tengcongensis (strain DSM 15242 / JCM 11007 / NBRC 100824 / MB4) (Thermoanaerobacter tengcongensis).